Here is a 255-residue protein sequence, read N- to C-terminus: Ribosomal RNA small subunit methyltransferase G (255 aa).

S-adenosyl-L-methionine is bound by residues Gly-89, Phe-94, 112–114 (DST), 140–141 (VE), and Arg-159.

This sequence belongs to the methyltransferase superfamily. RNA methyltransferase RsmG family.

The protein localises to the cytoplasm. In terms of biological role, specifically methylates the N7 position of a guanine in 16S rRNA. This chain is Ribosomal RNA small subunit methyltransferase G, found in Trichodesmium erythraeum (strain IMS101).